Consider the following 410-residue polypeptide: MILRGMEDSKSAQKRFEAAVKVIRSLPEDGSYDLSDDMLVLFYSYYKQATEGPCNTLKPNSWDPIGKAKWEAWKDLGNMSKDQAMTEYVQEIQLIIETLPVTDRMAELLDALDPFYEIVEDDDDDDDEGVSKAAPLFTGSTNADKDAERDEEVESESKEGNLDDYMELVEKQKDLSSTTGEKGSLLVFNRSEENSISSLTDGTHSSLNTVDDEEELVYDGSDDEMDSDSMDKPATPEKGSGVRSVRLADGSVVGANMQHGGNREPQCGSQDGKPQGLISPVPHPPTLGTVRNDRISACSGRERGCQGDGGQRGETADRMDKQAINTQITTILSELEDNMQDVLRRLTTLEQLTASQAEISPSKTWHSDKPKKRLSWWPLNSSPFTAVLTVLWPFAVHWLVQFYLQRRRRR.

The ACB domain maps to 12–101 (AQKRFEAAVK…IQLIIETLPV (90 aa)). An acyl-CoA is bound by residues 23–32 (IRSLPEDGSY), 43–47 (YSYYK), Lys69, and Tyr88. A compositionally biased stretch (acidic residues) spans 119-128 (VEDDDDDDDE). 3 disordered regions span residues 119-165 (VEDD…LDDY), 221-242 (SDDE…GSGV), and 254-320 (GANM…DRMD). The stretch at 326-355 (TQITTILSELEDNMQDVLRRLTTLEQLTAS) forms a coiled coil. A membrane pass occupies residues 382–404 (SPFTAVLTVLWPFAVHWLVQFYL).

Its subcellular location is the membrane. Binds medium- and long-chain acyl-CoA esters. This Danio rerio (Zebrafish) protein is Acyl-CoA-binding domain-containing protein 5-B (acbd5b).